We begin with the raw amino-acid sequence, 1160 residues long: Nck-associated protein 1 homolog (1160 aa).

Belongs to the HEM-1/HEM-2 family. Part of a Scar/WAVE complex containing brk1, scrA, abiA, pirA and napA.

Involved in regulation of actin and microtubule organization. Involved in cell adhesion. The sequence is that of Nck-associated protein 1 homolog (napA) from Dictyostelium discoideum (Social amoeba).